A 185-amino-acid polypeptide reads, in one-letter code: dCTP deaminase (185 aa).

Residues 107-112 (KSTYAR), 131-133 (TLE), glutamine 152, tyrosine 166, and glutamine 176 contribute to the dCTP site. The Proton donor/acceptor role is filled by glutamate 133.

Belongs to the dCTP deaminase family. In terms of assembly, homotrimer.

The catalysed reaction is dCTP + H2O + H(+) = dUTP + NH4(+). Its pathway is pyrimidine metabolism; dUMP biosynthesis; dUMP from dCTP (dUTP route): step 1/2. In terms of biological role, catalyzes the deamination of dCTP to dUTP. This chain is dCTP deaminase, found in Wolbachia sp. subsp. Brugia malayi (strain TRS).